The primary structure comprises 2703 residues: Neurogenic locus Notch protein (2703 aa).

Residues 1 to 52 form the signal peptide; that stretch reads MQSQRSRRRSRAPNTWICFWINKMHAVASLPASLPLLLLTLAFANLPNTVRG. Topologically, residues 53–1745 are extracellular; it reads TDTALVAASC…NGEPPANVKY (1693 aa). EGF-like domains are found at residues 58–95, 96–136, 139–176, and 177–215; these read VAAS…DYCE, HRNP…SLCE, VPNA…ERCE, and TKNL…DTCS. 24 disulfide bridges follow: cysteine 62–cysteine 73, cysteine 67–cysteine 83, cysteine 85–cysteine 94, cysteine 100–cysteine 111, cysteine 105–cysteine 124, cysteine 126–cysteine 135, cysteine 143–cysteine 154, cysteine 148–cysteine 164, cysteine 166–cysteine 175, cysteine 181–cysteine 192, cysteine 186–cysteine 203, cysteine 205–cysteine 214, cysteine 221–cysteine 232, cysteine 226–cysteine 241, cysteine 243–cysteine 252, cysteine 259–cysteine 270, cysteine 264–cysteine 279, cysteine 281–cysteine 290, cysteine 297–cysteine 308, cysteine 302–cysteine 317, cysteine 319–cysteine 328, cysteine 335–cysteine 349, cysteine 343–cysteine 358, and cysteine 360–cysteine 369. Residue threonine 72 is glycosylated (O-linked (Fuc...) threonine). An O-linked (Fuc...) threonine glycan is attached at threonine 110. O-linked (Fuc...) threonine glycosylation is present at threonine 153. Residue serine 183 is glycosylated (O-linked (Glc...) serine). An O-linked (Fuc...) threonine glycan is attached at threonine 191. O-linked (GlcNAc...) threonine glycosylation is present at threonine 210. In terms of domain architecture, EGF-like 5; calcium-binding spans 217–253; it reads DIEECQSNPCKYGGTCVNTHGSYQCMCPTGYTGKDCD. The O-linked (Glc...) serine glycan is linked to serine 223. O-linked (Fuc...) threonine glycosylation is present at threonine 231. The EGF-like 6 domain maps to 255–291; sequence KYKPCSPSPCQNGGICRSNGLSYECKCPKGFEGKNCE. Residues 293-329 form the EGF-like 7; calcium-binding domain; the sequence is NYDDCLGHLCQNGGTCIDGISDYTCRCPPNFTGRFCQ. Residue threonine 307 is glycosylated (O-linked (Fuc...) threonine). N-linked (GlcNAc...) asparagine glycosylation occurs at asparagine 322. Positions 331–370 constitute an EGF-like 8; calcium-binding domain; that stretch reads DVDECAQRDHPVCQNGATCTNTHGSYSCICVNGWAGLDCS. O-linked (Fuc...) threonine glycosylation is present at threonine 348. N-linked (GlcNAc...) asparagine glycosylation is present at asparagine 371. Residues 372 to 408 enclose the EGF-like 9; calcium-binding domain; the sequence is NTDDCKQAACFYGATCIDGVGSFYCQCTKGKTGLLCH. Intrachain disulfides connect cysteine 376-cysteine 387, cysteine 381-cysteine 396, cysteine 398-cysteine 407, cysteine 413-cysteine 424, cysteine 418-cysteine 435, cysteine 437-cysteine 446, cysteine 453-cysteine 465, and cysteine 459-cysteine 474. O-linked (Fuc...) threonine glycosylation is present at threonine 386. The 39-residue stretch at 409–447 folds into the EGF-like 10 domain; the sequence is LDDACTSNPCHADAICDTSPINGSYACSCATGYKGVDCS. Serine 427 is a glycosylation site (O-linked (Glc...) serine). Asparagine 430 carries N-linked (GlcNAc...) asparagine glycosylation. The region spanning 449 to 486 is the EGF-like 11; calcium-binding domain; that stretch reads DIDECDQGSPCEHNGICVNTPGSYRCNCSQGFTGPRCE. The N-linked (GlcNAc...) asparagine glycan is linked to asparagine 475. 78 disulfides stabilise this stretch: cysteine 476–cysteine 485, cysteine 492–cysteine 503, cysteine 497–cysteine 512, cysteine 514–cysteine 523, cysteine 530–cysteine 541, cysteine 535–cysteine 550, cysteine 552–cysteine 561, cysteine 568–cysteine 579, cysteine 573–cysteine 588, cysteine 590–cysteine 599, cysteine 606–cysteine 616, cysteine 611–cysteine 625, cysteine 627–cysteine 636, cysteine 643–cysteine 654, cysteine 648–cysteine 663, cysteine 665–cysteine 674, cysteine 681–cysteine 692, cysteine 686–cysteine 701, cysteine 703–cysteine 712, cysteine 719–cysteine 730, cysteine 724–cysteine 739, cysteine 741–cysteine 750, cysteine 757–cysteine 768, cysteine 762–cysteine 777, cysteine 779–cysteine 788, cysteine 795–cysteine 806, cysteine 800–cysteine 815, cysteine 817–cysteine 826, cysteine 833–cysteine 844, cysteine 838–cysteine 853, cysteine 855–cysteine 864, cysteine 871–cysteine 882, cysteine 876–cysteine 893, cysteine 895–cysteine 904, cysteine 911–cysteine 923, cysteine 917–cysteine 932, cysteine 934–cysteine 943, cysteine 950–cysteine 961, cysteine 955–cysteine 970, cysteine 972–cysteine 981, cysteine 988–cysteine 999, cysteine 993–cysteine 1008, cysteine 1010–cysteine 1019, cysteine 1026–cysteine 1037, cysteine 1031–cysteine 1046, cysteine 1048–cysteine 1057, cysteine 1064–cysteine 1075, cysteine 1069–cysteine 1084, cysteine 1086–cysteine 1095, cysteine 1102–cysteine 1113, cysteine 1107–cysteine 1122, cysteine 1124–cysteine 1133, cysteine 1155–cysteine 1160, cysteine 1171–cysteine 1180, cysteine 1187–cysteine 1198, cysteine 1192–cysteine 1207, cysteine 1209–cysteine 1218, cysteine 1225–cysteine 1236, cysteine 1230–cysteine 1245, cysteine 1247–cysteine 1256, cysteine 1263–cysteine 1274, cysteine 1268–cysteine 1283, cysteine 1285–cysteine 1294, cysteine 1301–cysteine 1314, cysteine 1306–cysteine 1323, cysteine 1325–cysteine 1334, cysteine 1341–cysteine 1352, cysteine 1346–cysteine 1361, cysteine 1363–cysteine 1372, cysteine 1379–cysteine 1389, cysteine 1384–cysteine 1400, cysteine 1402–cysteine 1411, cysteine 1419–cysteine 1430, cysteine 1424–cysteine 1439, cysteine 1441–cysteine 1450, cysteine 1482–cysteine 1505, cysteine 1487–cysteine 1500, and cysteine 1496–cysteine 1512. O-linked (GlcNAc...) threonine glycosylation occurs at threonine 481. The region spanning 488–524 is the EGF-like 12; calcium-binding domain; that stretch reads NINECESHPCQNEGSCLDDPGTFRCVCMPGFTGTQCE. Serine 494 carries O-linked (Glc...) serine glycosylation. An O-linked (Fuc...) serine glycan is attached at serine 502. Threonine 519 carries an O-linked (GlcNAc...) threonine glycan. The EGF-like 13; calcium-binding domain maps to 526 to 562; it reads DIDECQSNPCLNDGTCHDKINGFKCSCALGFTGARCQ. The O-linked (Glc...) serine glycan is linked to serine 532. Residues 564-600 enclose the EGF-like 14; calcium-binding domain; that stretch reads NIDDCQSQPCRNRGICHDSIAGYSCECPPGYTGTSCE. Serine 570 is a glycosylation site (O-linked (Glc...) serine). The O-linked (GlcNAc...) threonine glycan is linked to threonine 595. Residues 602–637 enclose the EGF-like 15; calcium-binding domain; the sequence is NINDCDSNPCHRGKCIDDVNSFKCLCDPGYTGYICQ. A glycan (O-linked (Glc...) serine) is linked at serine 608. Residues 639–675 form the EGF-like 16; calcium-binding domain; that stretch reads QINECESNPCQFDGHCQDRVGSYYCQCQAGTSGKNCE. Residue serine 645 is glycosylated (O-linked (Glc...) serine). Residues 677 to 713 form the EGF-like 17; calcium-binding domain; that stretch reads NVNECHSNPCNNGATCIDGINSYKCQCVPGFTGQHCE. Serine 683 is a glycosylation site (O-linked (Glc...) serine). A glycan (O-linked (Fuc...) threonine) is linked at threonine 691. The region spanning 715-751 is the EGF-like 18; calcium-binding domain; the sequence is NVDECISSPCANNGVCIDQVNGYKCECPRGFYDAHCL. Serine 721 carries O-linked (Glc...) serine glycosylation. One can recognise an EGF-like 19; calcium-binding domain in the interval 753–789; it reads DVDECASNPCVNEGRCEDGINEFICHCPPGYTGKRCE. Serine 759 carries O-linked (Glc...) serine glycosylation. Residues 791 to 827 form the EGF-like 20; calcium-binding domain; that stretch reads DIDECSSNPCQHGGTCYDKLNAFSCQCMPGYTGQKCE. Serine 797 carries O-linked (Glc...) serine glycosylation. Threonine 805 is a glycosylation site (O-linked (Fuc...) threonine). O-linked (GlcNAc...) threonine glycosylation occurs at threonine 822. One can recognise an EGF-like 21; calcium-binding domain in the interval 829-865; that stretch reads NIDDCVTNPCGNGGTCIDKVNGYKCVCKVPFTGRDCE. Threonine 843 is a glycosylation site (O-linked (Fuc...) threonine). Residues 867–905 enclose the EGF-like 22 domain; sequence KMDPCASNRCKNEAKCTPSSNFLDFSCTCKLGYTGRYCD. An EGF-like 23; calcium-binding domain is found at 907–944; the sequence is DIDECSLSSPCRNGASCLNVPGSYRCLCTKGYEGRDCA. Serine 922 carries O-linked (Fuc...) serine glycosylation. An EGF-like 24; calcium-binding domain is found at 946-982; that stretch reads NTDDCASFPCQNGGTCLDGIGDYSCLCVDGFDGKHCE. Serine 952 carries an O-linked (Glc...) serine glycan. An O-linked (Fuc...) threonine glycan is attached at threonine 960. The 37-residue stretch at 984 to 1020 folds into the EGF-like 25 domain; that stretch reads DINECLSQPCQNGATCSQYVNSYTCTCPLGFSGINCQ. The O-linked (Glc...) serine glycan is linked to serine 990. O-linked (Fuc...) threonine glycosylation occurs at threonine 998. The EGF-like 26; calcium-binding domain maps to 1022–1058; the sequence is NDEDCTESSCLNGGSCIDGINGYNCSCLAGYSGANCQ. An O-linked (Fuc...) serine glycan is attached at serine 1036. Asparagine 1045 carries an N-linked (GlcNAc...) asparagine glycan. 3 consecutive EGF-like domains span residues 1060-1096, 1098-1134, and 1136-1181; these read KLNK…KQCS, YVDW…KLCD, and QTIS…SYCQ. O-linked (Glc...) serine glycosylation is present at serine 1066. Residue threonine 1074 is glycosylated (O-linked (Fuc...) threonine). Threonine 1112 carries an O-linked (Fuc...) threonine glycan. Asparagine 1157 carries N-linked (GlcNAc...) asparagine glycosylation. The EGF-like 30; calcium-binding domain maps to 1183–1219; it reads EIDECQSQPCQNGGTCRDLIGAYECQCRQGFQGQNCE. O-linked (Glc...) serine glycosylation is present at serine 1189. O-linked (Fuc...) threonine glycosylation is present at threonine 1197. The EGF-like 31; calcium-binding domain maps to 1221 to 1257; sequence NIDDCAPNPCQNGGTCHDRVMNFSCSCPPGTMGIICE. O-linked (Fuc...) threonine glycosylation is present at threonine 1235. Asparagine 1242 carries N-linked (GlcNAc...) asparagine glycosylation. Residues 1259-1295 enclose the EGF-like 32; calcium-binding domain; it reads NKDDCKPGACHNNGSCIDRVGGFECVCQPGFVGARCE. An N-linked (GlcNAc...) asparagine glycan is attached at asparagine 1271. Serine 1273 is a glycosylation site (O-linked (Fuc...) serine). EGF-like domains lie at 1297-1335, 1337-1373, 1375-1412, and 1415-1451; these read DINE…RHCE, KVDF…KNCE, SGQD…EHCE, and TLDE…KRCD. An O-linked (Glc...) serine glycan is attached at serine 1303. O-linked (Glc...) serine glycosylation occurs at serine 1381. LNR repeat units lie at residues 1482 to 1521, 1522 to 1557, and 1559 to 1599; these read CDKR…PWAN, CTAN…RKLK, and CDSL…TQSP. N-linked (GlcNAc...) asparagine glycosylation occurs at asparagine 1521. Intrachain disulfides connect cysteine 1522–cysteine 1545, cysteine 1527–cysteine 1540, cysteine 1536–cysteine 1552, cysteine 1559–cysteine 1585, cysteine 1567–cysteine 1580, and cysteine 1576–cysteine 1592. 2 N-linked (GlcNAc...) asparagine glycosylation sites follow: asparagine 1594 and asparagine 1627. Residues 1746-1766 form a helical membrane-spanning segment; the sequence is VITGIILVIIALAFFGMVLST. Residues 1767–2703 lie on the Cytoplasmic side of the membrane; it reads QRKRAHGVTW…ANKGSEAIYI (937 aa). A disordered region spans residues 1810 to 1850; that stretch reads QSQGVGQPGAHWSDDESDMPLPKRQRSDPVSGVGLGNNGGY. 7 ANK repeats span residues 1901-1945, 1950-1979, 1983-2013, 2017-2046, 2050-2079, 2083-2112, and 2116-2139; these read CGLT…ELNA, TGET…DANC, TGRT…NLNA, DGTT…DINA, SGKT…NRDA, KDET…NREI, and MDRL…LDEH. Residues 2172–2257 are disordered; it reads TVISAGNGGN…LTGGVSGVPG (86 aa). Residues 2228-2238 show a composition bias toward low complexity; that stretch reads KKTSAASKKAA. Positions 2325–2328 are interaction with Nedd4; that stretch reads PPSY. Disordered stretches follow at residues 2399 to 2452, 2488 to 2524, 2579 to 2620, and 2632 to 2703; these read SGAG…PTSP, GGGG…APPQ, LDLN…PSSQ, and PSSQ…AIYI. Polar residues predominate over residues 2414–2429; it reads PYSNQSPPHSVQSSLA. Serine 2447 bears the Phosphoserine mark. The span at 2488-2497 shows a compositional bias: gly residues; it reads GGGGGGGVGQ. The span at 2598-2619 shows a compositional bias: low complexity; sequence PPSIQSSMSGSSPSTNMLSPSS. The segment covering 2632-2653 has biased composition (polar residues); sequence PSSQHSGGHTPQHLVQTLDSYP. Residues 2659 to 2675 show a composition bias toward low complexity; that stretch reads SPGHWSSSSPRSNSDWS. Residues 2677 to 2687 show a composition bias toward polar residues; that stretch reads GVQSPAANNLY.

The protein belongs to the NOTCH family. Homomer. Interacts with Su(H) when activated. Interacts with Dx via its ANK repeats. Interacts with Delta via the EGF repeats and the Delta EGF repeats. Interacts with Nedd4 and Su(dx). Interacts with O-fut1; the interaction glycosylates N and transports N to early endosomes. Interacts with Akap200; the interaction stabilizes N/Notch protein levels by preventing Cbl-mediated ubiquitination and subsequent lysosomal degradation of N/Notch. In terms of processing, upon binding its ligands such as Delta or Serrate, it is cleaved (S2 cleavage) in its extracellular domain, close to the transmembrane domain. S2 cleavage is probably mediated by Kuz. It is then cleaved (S3 cleavage) downstream of its transmembrane domain, releasing it from the cell membrane. S3 cleavage requires Psn. Post-translationally, O-glycosylated. Three forms of O-glycosylation (O-fucosylation, O-glucosylation and O-GlcNAcylation) are detected. O-fucosylated by O-fut1 and fng in the EGF repeat domain inhibits both Serrate/Ser- and Delta/Dl-binding. O-glucosylation by rumi in the endoplasmic reticulum is necessary for correct folding and signaling. Ubiquitinated by various ubiquitin ligases; which promotes ligand-independent endocytosis and proteasomal degradation. Ubiquitinated by Nedd4. May also be ubiquitinated by Su(dx) and Cbl. Mono-ubiquitinated, possibly by dx/deltex; this may be involved in the ESCRT-III mediated targeting to multivesicular bodies.

Its subcellular location is the cell membrane. It is found in the endosome. It localises to the multivesicular body. The protein localises to the nucleus. Essential signaling protein which has a major role in many developmental processes. Functions as a receptor for membrane-bound ligands Delta and Serrate to regulate cell-fate determination. Upon ligand activation, and releasing from the cell membrane, the Notch intracellular domain (NICD) forms a transcriptional activator complex with Su(H) (Suppressor of hairless) and activates genes of the E(spl) complex. Regulates oogenesis, the differentiation of the ectoderm and the development of the central and peripheral nervous system, eye, wing disk, muscles and segmental appendages such as antennae and legs, through lateral inhibition or induction. Regulates neuroblast self-renewal, identity and proliferation through the regulation of bHLH-O proteins; in larval brains, involved in the maintenance of type II neuroblast self-renewal and identity by suppressing erm expression together with pnt; might also regulate dpn expression through the activation of the transcriptional regulator Su(H). Targeted for ESCRT-mediated endosomal sequestration and lysosomal degradation by various E3 ubiquitin ligases to regulate the Notch signaling pathway. Can undergo ligand-dependent and non-canonical ligand-independent activation. Ligand-independent activation is dependent on endosome acidification and probably occurs in late endosomes or lysosome. Ectopic ligand-independent activation occurs when disruption of the endolysosomal pathway, particularly of the ESCRT-III complex, prevents sequestration of the receptor in intraluminal vesicles of multivesicular bodies. The protein is Neurogenic locus Notch protein of Drosophila melanogaster (Fruit fly).